We begin with the raw amino-acid sequence, 396 residues long: Ribosomal RNA large subunit methyltransferase I (396 aa).

Residues 2–79 enclose the PUA domain; the sequence is AIRIKLKPGR…REEEIDRAFF (78 aa).

It belongs to the methyltransferase superfamily. RlmI family.

The protein localises to the cytoplasm. The enzyme catalyses cytidine(1962) in 23S rRNA + S-adenosyl-L-methionine = 5-methylcytidine(1962) in 23S rRNA + S-adenosyl-L-homocysteine + H(+). Functionally, specifically methylates the cytosine at position 1962 (m5C1962) of 23S rRNA. The chain is Ribosomal RNA large subunit methyltransferase I from Shewanella putrefaciens (strain CN-32 / ATCC BAA-453).